The primary structure comprises 317 residues: Tenomodulin (317 aa).

The Cytoplasmic segment spans residues 1-30 (MAKNPPENCEGCHILNAEALKSKKIRKSLK). A helical; Signal-anchor for type II membrane protein membrane pass occupies residues 31–50 (ICGLVFGILALTLIVLFWGS). The Extracellular portion of the chain corresponds to 51-317 (KHFWPEVSKK…WWVARMLGRV (267 aa)). In terms of domain architecture, BRICHOS spans 93-186 (GNGTDETLEV…ICDNVTMYWI (94 aa)). Asparagine 94 carries N-linked (GlcNAc...) asparagine glycosylation. Cysteine 120 and cysteine 178 are joined by a disulfide. Asparagine 180 is a glycosylation site (N-linked (GlcNAc...) asparagine). Phosphoserine is present on serine 239.

This sequence belongs to the chondromodulin-1 family. In terms of tissue distribution, highly expressed in tendons.

Its subcellular location is the membrane. It is found in the nucleus envelope. In terms of biological role, may be an angiogenesis inhibitor. The protein is Tenomodulin (Tnmd) of Rattus norvegicus (Rat).